A 502-amino-acid chain; its full sequence is UDP-N-acetylglucosamine diphosphorylase 2 (502 aa).

A Substrate binding motif is present at residues 130–133 (LSGG). N250 contributes to the substrate binding site. Positions 332–333 (EY) match the Substrate binding motif. K429 serves as a coordination point for substrate.

This sequence belongs to the UDPGP type 1 family. In terms of assembly, monomer. Mg(2+) serves as cofactor. The cofactor is Mn(2+). Expressed in root tips, stipules, lateral root primordia, immature anthers and at the branching points of the flowering shoots.

It localises to the cytoplasm. It catalyses the reaction N-acetyl-alpha-D-glucosamine 1-phosphate + UTP + H(+) = UDP-N-acetyl-alpha-D-glucosamine + diphosphate. The catalysed reaction is N-acetyl-alpha-D-galactosamine 1-phosphate + UTP + H(+) = UDP-N-acetyl-alpha-D-galactosamine + diphosphate. It carries out the reaction alpha-D-glucose 1-phosphate + UTP + H(+) = UDP-alpha-D-glucose + diphosphate. The protein operates within nucleotide-sugar biosynthesis; UDP-N-acetyl-alpha-D-glucosamine biosynthesis; UDP-N-acetyl-alpha-D-glucosamine from N-acetyl-alpha-D-glucosamine 1-phosphate: step 1/1. Uridylyltransferase involved in the biosynthesis of UDP-glucosamine, an essential precursor for glycoprotein and glycolipid synthesis. Can use UDP-glucosamine, the 4-epimer UDP-galactosamine and UDP-glucose as substrates. Acts redundantly with GLCNAC1PUT1. Required for gametogenesis and embryo development. The protein is UDP-N-acetylglucosamine diphosphorylase 2 (GLCNAC1PUT2) of Arabidopsis thaliana (Mouse-ear cress).